The sequence spans 326 residues: Acetyl-coenzyme A carboxylase carboxyl transferase subunit alpha (326 aa).

The CoA carboxyltransferase C-terminal domain occupies 44–298; the sequence is KLETRAMQLR…KQALLDNLDE (255 aa).

This sequence belongs to the AccA family. As to quaternary structure, acetyl-CoA carboxylase is a heterohexamer composed of biotin carboxyl carrier protein (AccB), biotin carboxylase (AccC) and two subunits each of ACCase subunit alpha (AccA) and ACCase subunit beta (AccD).

It localises to the cytoplasm. The catalysed reaction is N(6)-carboxybiotinyl-L-lysyl-[protein] + acetyl-CoA = N(6)-biotinyl-L-lysyl-[protein] + malonyl-CoA. Its pathway is lipid metabolism; malonyl-CoA biosynthesis; malonyl-CoA from acetyl-CoA: step 1/1. Its function is as follows. Component of the acetyl coenzyme A carboxylase (ACC) complex. First, biotin carboxylase catalyzes the carboxylation of biotin on its carrier protein (BCCP) and then the CO(2) group is transferred by the carboxyltransferase to acetyl-CoA to form malonyl-CoA. The polypeptide is Acetyl-coenzyme A carboxylase carboxyl transferase subunit alpha (Nostoc sp. (strain PCC 7120 / SAG 25.82 / UTEX 2576)).